We begin with the raw amino-acid sequence, 296 residues long: 4-hydroxy-tetrahydrodipicolinate synthase (296 aa).

Threonine 49 serves as a coordination point for pyruvate. Tyrosine 137 acts as the Proton donor/acceptor in catalysis. Residue lysine 166 is the Schiff-base intermediate with substrate of the active site. Isoleucine 208 lines the pyruvate pocket.

It belongs to the DapA family. In terms of assembly, homotetramer; dimer of dimers.

It localises to the cytoplasm. It carries out the reaction L-aspartate 4-semialdehyde + pyruvate = (2S,4S)-4-hydroxy-2,3,4,5-tetrahydrodipicolinate + H2O + H(+). It functions in the pathway amino-acid biosynthesis; L-lysine biosynthesis via DAP pathway; (S)-tetrahydrodipicolinate from L-aspartate: step 3/4. In terms of biological role, catalyzes the condensation of (S)-aspartate-beta-semialdehyde [(S)-ASA] and pyruvate to 4-hydroxy-tetrahydrodipicolinate (HTPA). In Chlorobium chlorochromatii (strain CaD3), this protein is 4-hydroxy-tetrahydrodipicolinate synthase.